The chain runs to 343 residues: Plasminogen (343 aa).

2 Kringle domains span residues 1–17 (APQA…DCML) and 41–120 (AQEP…GCVA). The plasmin heavy chain A stretch occupies residues 1-140 (APQAPSVENP…LRRRSREHFC (140 aa)). Cystine bridges form between Cys15-Cys94, Cys36-Cys77, and Cys65-Cys89. A Peptidase S1 domain is found at 114–341 (VVGGCVATPH…YVPWIEETMR (228 aa)). The residue at position 130 (Ser130) is a Phosphoserine. Cys140 and Cys156 are disulfide-bonded. Positions 141–343 (GGTLISPEWV…PWIEETMRRY (203 aa)) are plasmin light chain B. Residues His155 and Asp198 each act as charge relay system in the active site. At Ser221 the chain carries Phosphoserine. Cystine bridges form between Cys232/Cys299, Cys262/Cys278, and Cys289/Cys317. The Charge relay system role is filled by Ser293.

This sequence belongs to the peptidase S1 family. Plasminogen subfamily. Interacts with CSPG4 and AMOT. Interacts (via the Kringle domains) with HRG; the interaction tethers PLG to the cell surface and enhances its activation. Interacts (via Kringle 4 domain) with ADA; the interaction stimulates PLG activation when in complex with DPP4. Angiostatin: Interacts with ATP5F1A; the interaction inhibits most of the angiogenic effects of angiostatin.

The protein localises to the secreted. It carries out the reaction Preferential cleavage: Lys-|-Xaa &gt; Arg-|-Xaa, higher selectivity than trypsin. Converts fibrin into soluble products.. Its activity is regulated as follows. Converted into plasmin by plasminogen activators, both plasminogen and its activator being bound to fibrin. Cannot be activated with streptokinase. Its function is as follows. Plasmin dissolves the fibrin of blood clots and acts as a proteolytic factor in a variety of other processes including embryonic development, tissue remodeling, tumor invasion, and inflammation. In ovulation, weakens the walls of the Graafian follicle. It activates the urokinase-type plasminogen activator, collagenases and several complement zymogens, such as C1, C4 and C5. Cleavage of fibronectin and laminin leads to cell detachment and apoptosis. Also cleaves fibrin, thrombospondin and von Willebrand factor. Its role in tissue remodeling and tumor invasion may be modulated by CSPG4. Binds to cells. The protein is Plasminogen (PLG) of Ovis aries (Sheep).